A 348-amino-acid chain; its full sequence is Dihydroorotase (348 aa).

Positions 17 and 19 each coordinate Zn(2+). Residues 19–21 and asparagine 45 contribute to the substrate site; that span reads HLR. Zn(2+)-binding residues include lysine 103, histidine 140, and histidine 178. The residue at position 103 (lysine 103) is an N6-carboxylysine. Histidine 140 contacts substrate. Leucine 223 is a binding site for substrate. Aspartate 251 provides a ligand contact to Zn(2+). The active site involves aspartate 251. Residues histidine 255 and alanine 267 each coordinate substrate.

Belongs to the metallo-dependent hydrolases superfamily. DHOase family. Class II DHOase subfamily. In terms of assembly, homodimer. Zn(2+) serves as cofactor.

It carries out the reaction (S)-dihydroorotate + H2O = N-carbamoyl-L-aspartate + H(+). The protein operates within pyrimidine metabolism; UMP biosynthesis via de novo pathway; (S)-dihydroorotate from bicarbonate: step 3/3. Its function is as follows. Catalyzes the reversible cyclization of carbamoyl aspartate to dihydroorotate. The sequence is that of Dihydroorotase from Salmonella typhi.